The following is a 208-amino-acid chain: Guanylate kinase (208 aa).

The Guanylate kinase-like domain occupies 4–184; that stretch reads GTLYIVSAPS…ALMDFKAIIR (181 aa). 11–18 is a binding site for ATP; that stretch reads APSGAGKS.

It belongs to the guanylate kinase family.

It localises to the cytoplasm. It catalyses the reaction GMP + ATP = GDP + ADP. In terms of biological role, essential for recycling GMP and indirectly, cGMP. This chain is Guanylate kinase, found in Photobacterium profundum (strain SS9).